Here is a 584-residue protein sequence, read N- to C-terminus: MSLLQIYWRALQYLAAYRLKVSLVVAANIILAVITIAEPILFGWIIDAISSGKPDKDILFLWGGFGIFNTIAFVLVAREADRLAHGRRASLLTEAFGRIISMPLSWHHQRGTSNALHTLLRASETLFGLWLEFMRTHLATAVALVLLVPTAFSMDVRLTLVLIVLGLIYVAIGKMVMDKTKDGQASVESHYHTVFSHVSDTISNVSVVHSYNRIQAETSALKTFTSKLLDAQYPVLDWWAIASGLNRIASTASMLIILIIGTMLVQSGELRVGDVIAFIGFANLLIARLDQMRQFSTQIFEARAKLEDFYVLEDSVQDRDEPVGNRDLKSVRGDVEFRHVSFDFANTTQGVKDVSFTVKAGQTIAIVGPTGAGKTTLINLLQRVHEPQQGQILIDGADISTITRQSLRNSIATVFQDAGILNRSIADNIRIGRENATDEDIVKAAEAAAATDFIESRLSGFDTDVGERGNRLSGGERQRIAIARAILKDAPILVLDEATSALDVETEERVKSAIDRLRQNRTTFIIAHRLSTVREADQVLFLDHGRIVEMGGYDELSAKGGRFAALLHTSGLLNDDDKTAVKVG.

One can recognise an ABC transmembrane type-1 domain in the interval 21–301 (VSLVVAANII…MRQFSTQIFE (281 aa)). 6 helical membrane passes run 29-49 (IILA…IDAI), 57-77 (DILF…VLVA), 136-156 (THLA…SMDV), 158-178 (LTLV…MVMD), 248-268 (IAST…VQSG), and 272-292 (VGDV…LDQM). The 235-residue stretch at 335–569 (VEFRHVSFDF…GGRFAALLHT (235 aa)) folds into the ABC transporter domain. 368 to 375 (GPTGAGKT) lines the ATP pocket.

Belongs to the ABC transporter superfamily. Beta-(1--&gt;2)glucan exporter (TC 3.A.1.108.1) family. Homodimer.

It is found in the cell inner membrane. The catalysed reaction is [(1-&gt;2)-beta-D-glucosyl](n)(in) + ATP + H2O = [(1-&gt;2)-beta-D-glucosyl](n)(out) + ADP + phosphate + H(+). Involved in beta-(1--&gt;2)glucan export. Transmembrane domains (TMD) form a pore in the inner membrane and the ATP-binding domain (NBD) is responsible for energy generation. The polypeptide is Beta-(1--&gt;2)glucan export ATP-binding/permease protein NdvA (Agrobacterium vitis (Rhizobium vitis)).